The chain runs to 216 residues: Thiopurine S-methyltransferase (216 aa).

Residues W11, L46, E67, and R122 each contribute to the S-adenosyl-L-methionine site.

The protein belongs to the class I-like SAM-binding methyltransferase superfamily. TPMT family.

It is found in the cytoplasm. The catalysed reaction is S-adenosyl-L-methionine + a thiopurine = S-adenosyl-L-homocysteine + a thiopurine S-methylether.. This Vibrio campbellii (strain ATCC BAA-1116) protein is Thiopurine S-methyltransferase.